A 78-amino-acid polypeptide reads, in one-letter code: Conotoxin 1 (78 aa).

The signal sequence occupies residues 1–22 (MKLTCMMFVAVLFLTASVFITA). Residues 23–51 (DDSRNGIENLPRMRRHEMKNPKASKLNKR) constitute a propeptide that is removed on maturation. Glutamine 52 is subject to Pyrrolidone carboxylic acid. 3 disulfide bridges follow: cysteine 53–cysteine 69, cysteine 60–cysteine 73, and cysteine 68–cysteine 77.

It belongs to the conotoxin O1 superfamily. In terms of tissue distribution, expressed by the venom duct.

It localises to the secreted. The chain is Conotoxin 1 from Conus imperialis (Imperial cone).